The primary structure comprises 390 residues: T-cell surface glycoprotein CD1e, membrane-associated (390 aa).

Residues 1 to 14 (MLLLILLFFKGLVC) form the signal peptide. A propeptide spans 15–33 (HEKSIVGPQPLGWHHPAEA) (removed in sCD1e). 2 N-linked (GlcNAc...) asparagine glycosylation sites follow: N49 and N70. 2 disulfide bridges follow: C131–C194 and C234–C288. An Ig-like domain is found at 215–306 (PEVWLSRGPS…GHDIIIHWGG (92 aa)). A helical transmembrane segment spans residues 305–325 (GGYSILLILMYVAVIVTLVTL).

In terms of assembly, heterodimer with B2M (beta-2-microglobulin). The association with B2M appears to be facilitated by the presence of the propeptide. Mono-ubiquitinated. In terms of processing, proteolytically cleaved in endosomes to yield a soluble form.

The protein resides in the golgi apparatus membrane. Its subcellular location is the early endosome. It localises to the late endosome. The protein localises to the lysosome lumen. T-cell surface glycoprotein CD1e, soluble is required for the presentation of glycolipid antigens on the cell surface. The membrane-associated form is not active. The sequence is that of T-cell surface glycoprotein CD1e, membrane-associated (CD1E) from Cavia porcellus (Guinea pig).